Reading from the N-terminus, the 137-residue chain is MEAVLTKLDQEEKRALQDFHRCAWEETKNIINDFLEIPEERCTYKFNPYTKKMELLFTPEFHTAWQEVPECREFILNFLRLISGHRVVLKGPIIVFTKEVKNLGIPSTINVDFQANIENMDDLQKGNLIGKMNIKES.

It belongs to the asfivirus A137R family. Interacts with host TBK1.

It is found in the virion. The protein resides in the host cytoplasm. Functionally, plays a role in the inhibition of the host innate immune response. Mechanistically, promotes the autophagy-mediated lysosomal degradation of host TBK1 and affects IRF3 nuclear translocation to block type I IFN production. This is Structural protein A137R from African swine fever virus (isolate Warthog/Namibia/Wart80/1980) (ASFV).